Reading from the N-terminus, the 434-residue chain is Angio-associated migratory cell protein (434 aa).

Residues 1-63 (MESESESGAA…EEEEEEGNEE (63 aa)) form a disordered region. Ser-20 carries the post-translational modification Phosphoserine. The span at 39 to 62 (DPDDLAQEMEDVDFEEEEEEEGNE) shows a compositional bias: acidic residues. WD repeat units follow at residues 89–129 (LHSA…LLFE), 132–171 (GHKDSVTCAGFSHDSTLVATGDMSGLLKVWQVDTKEEVWS), 173–212 (EAGDLEWMEWHPRAPVLLAGTADGNTWMWKVPNGDCKTFQ), 214–254 (PNCP…HVLK), 258–299 (GHQG…GVFR), 315–354 (SESNSVESLGFCSVMPLAAVGYLDGTLAIYDLATQTLRHQ), 356–395 (QHQSGIVQLLWEAGTAVVYTCSLDGIVRLWDARTGRLLTD), and 398–433 (GHTAEILDFALSKDASLVVTTSGDHKAKVFCVQRPD).

The protein resides in the cell membrane. The protein localises to the cytoplasm. Plays a role in angiogenesis and cell migration. In smooth muscle cell migration, may act through the RhoA pathway. In Pongo abelii (Sumatran orangutan), this protein is Angio-associated migratory cell protein (AAMP).